The sequence spans 190 residues: FMN reductase (NADH) RutF (190 aa).

The protein belongs to the non-flavoprotein flavin reductase family. RutF subfamily.

It carries out the reaction FMNH2 + NAD(+) = FMN + NADH + 2 H(+). Functionally, catalyzes the reduction of FMN to FMNH2 which is used to reduce pyrimidine by RutA via the Rut pathway. The polypeptide is FMN reductase (NADH) RutF (Pantoea ananatis (strain LMG 20103)).